A 378-amino-acid chain; its full sequence is Chitinase (378 aa).

Residues 1–28 form the signal peptide; the sequence is MNFTVKYSFLVICLLCCLLSTYVSVIEG. Residues 53–378 form the GH18 domain; the sequence is GIIQGYYPSW…AIEYFVESLH (326 aa). Glu-174 functions as the Proton donor in the catalytic mechanism. Cys-220 and Cys-230 are joined by a disulfide.

The protein belongs to the glycosyl hydrolase 18 family. Forms a hetero-multimeric, high molecular weight complex composed of at least CHT1, SOAP AND WARP. Within the complex, may interact with WARP via a disulfide bond.

It localises to the secreted. It is found in the cytoplasmic vesicle. The protein resides in the secretory vesicle. The protein localises to the microneme. It catalyses the reaction Random endo-hydrolysis of N-acetyl-beta-D-glucosaminide (1-&gt;4)-beta-linkages in chitin and chitodextrins.. Its activity is regulated as follows. Inhibited by allosamidin. Its function is as follows. Endochitinase that cleaves beta-1,4-linkages between tri- and tetramers of N-acetylglucosamine (GlcNAc) from penta- and hexameric chitin oligomers. Does not cleave smaller chitin oligosaccharides. Required to cross the acellular, chitin-containing peritrophic matrix (PM) which is formed around the ingested blood meal in the mosquito midgut allowing the ookinete to invade the mosquito gut epithelium. This Plasmodium falciparum (isolate 3D7) protein is Chitinase.